Reading from the N-terminus, the 305-residue chain is Protoheme IX farnesyltransferase (305 aa).

Transmembrane regions (helical) follow at residues 28–48, 52–72, 101–121, 122–142, 149–169, 174–194, 218–238, 240–260, and 283–303; these read IIEL…QGVP, LVLL…ALNM, LAFG…TVNW, LSAW…TMIL, NIVW…SSVT, WAPV…YWPL, VVAR…LLLT, LGYT…FWLW, and LFHW…VDPF.

This sequence belongs to the UbiA prenyltransferase family. Protoheme IX farnesyltransferase subfamily.

Its subcellular location is the cell membrane. The enzyme catalyses heme b + (2E,6E)-farnesyl diphosphate + H2O = Fe(II)-heme o + diphosphate. It participates in porphyrin-containing compound metabolism; heme O biosynthesis; heme O from protoheme: step 1/1. In terms of biological role, converts heme B (protoheme IX) to heme O by substitution of the vinyl group on carbon 2 of heme B porphyrin ring with a hydroxyethyl farnesyl side group. The protein is Protoheme IX farnesyltransferase of Streptomyces avermitilis (strain ATCC 31267 / DSM 46492 / JCM 5070 / NBRC 14893 / NCIMB 12804 / NRRL 8165 / MA-4680).